Here is a 52-residue protein sequence, read N- to C-terminus: Conotoxin reg3h (52 aa).

Residue Ala-1 is a signal peptide. Residues 2-33 (LPLDGDQPADQPAERMQDISPELNPLFHPVKR) constitute a propeptide that is removed on maturation. 3 disulfide bridges follow: Cys-35–Cys-49, Cys-36–Cys-47, and Cys-41–Cys-50. A 4-hydroxyproline mark is found at Pro-38, Pro-48, and Pro-51. Asparagine amide is present on Asn-52.

As to expression, expressed by the venom duct.

The protein resides in the secreted. This is Conotoxin reg3h from Conus regius (Crown cone).